The sequence spans 223 residues: Deoxyribose-phosphate aldolase (223 aa).

The Proton donor/acceptor role is filled by Asp-91. The active-site Schiff-base intermediate with acetaldehyde is Lys-153. Lys-182 serves as the catalytic Proton donor/acceptor.

The protein belongs to the DeoC/FbaB aldolase family. DeoC type 1 subfamily.

The protein localises to the cytoplasm. It carries out the reaction 2-deoxy-D-ribose 5-phosphate = D-glyceraldehyde 3-phosphate + acetaldehyde. It functions in the pathway carbohydrate degradation; 2-deoxy-D-ribose 1-phosphate degradation; D-glyceraldehyde 3-phosphate and acetaldehyde from 2-deoxy-alpha-D-ribose 1-phosphate: step 2/2. Its function is as follows. Catalyzes a reversible aldol reaction between acetaldehyde and D-glyceraldehyde 3-phosphate to generate 2-deoxy-D-ribose 5-phosphate. This is Deoxyribose-phosphate aldolase from Yersinia pestis bv. Antiqua (strain Angola).